A 150-amino-acid chain; its full sequence is Large ribosomal subunit protein bL9 (150 aa).

This sequence belongs to the bacterial ribosomal protein bL9 family.

Binds to the 23S rRNA. The sequence is that of Large ribosomal subunit protein bL9 from Shewanella oneidensis (strain ATCC 700550 / JCM 31522 / CIP 106686 / LMG 19005 / NCIMB 14063 / MR-1).